The following is a 271-amino-acid chain: Formamidopyrimidine-DNA glycosylase (271 aa).

The active-site Schiff-base intermediate with DNA is the proline 2. Glutamate 3 serves as the catalytic Proton donor. Lysine 57 functions as the Proton donor; for beta-elimination activity in the catalytic mechanism. DNA is bound by residues histidine 90, arginine 109, and lysine 151. The FPG-type zinc-finger motif lies at 236–270; sequence HVYGRGGETCTSCGNLLSEIRLGQRTTVFCGICQT. Arginine 260 serves as the catalytic Proton donor; for delta-elimination activity.

The protein belongs to the FPG family. As to quaternary structure, monomer. The cofactor is Zn(2+).

The enzyme catalyses Hydrolysis of DNA containing ring-opened 7-methylguanine residues, releasing 2,6-diamino-4-hydroxy-5-(N-methyl)formamidopyrimidine.. The catalysed reaction is 2'-deoxyribonucleotide-(2'-deoxyribose 5'-phosphate)-2'-deoxyribonucleotide-DNA = a 3'-end 2'-deoxyribonucleotide-(2,3-dehydro-2,3-deoxyribose 5'-phosphate)-DNA + a 5'-end 5'-phospho-2'-deoxyribonucleoside-DNA + H(+). Functionally, involved in base excision repair of DNA damaged by oxidation or by mutagenic agents. Acts as a DNA glycosylase that recognizes and removes damaged bases. Has a preference for oxidized purines, such as 7,8-dihydro-8-oxoguanine (8-oxoG). Has AP (apurinic/apyrimidinic) lyase activity and introduces nicks in the DNA strand. Cleaves the DNA backbone by beta-delta elimination to generate a single-strand break at the site of the removed base with both 3'- and 5'-phosphates. This Shewanella sp. (strain W3-18-1) protein is Formamidopyrimidine-DNA glycosylase.